The following is a 343-amino-acid chain: MGARVAVAGASGYSGGELLRLIAAHPELELAVATAASHAGQPIGAVHPHLVDLADQVFAPTDPAVLGDADVVFLALPHGQSAAIAATLPESALVVDIGADFRLRDPAAWAKFYGGTHAGTWTYGLPELPGARAEIAKSRRIANPGCYVTAATLALAPLFAAHLVDPDDVVIVAASGTSGAGRSLKPNLLASEVMGSLAAYKVGGVHQHTPEIEQNLSQAAGEPVTVSFTPILAPLPRGILATCTARPKAGVDGDAIRAALANAYHDEPFVHLLPPDVWPQTAATLGSNSVHLQAAFDEAARRVVVVAALDNLTKGAAGQAIQNANIALGFPETTGLTRSGVAP.

Cys-146 is an active-site residue.

Belongs to the NAGSA dehydrogenase family. Type 1 subfamily.

The protein resides in the cytoplasm. It catalyses the reaction N-acetyl-L-glutamate 5-semialdehyde + phosphate + NADP(+) = N-acetyl-L-glutamyl 5-phosphate + NADPH + H(+). Its pathway is amino-acid biosynthesis; L-arginine biosynthesis; N(2)-acetyl-L-ornithine from L-glutamate: step 3/4. Functionally, catalyzes the NADPH-dependent reduction of N-acetyl-5-glutamyl phosphate to yield N-acetyl-L-glutamate 5-semialdehyde. The protein is N-acetyl-gamma-glutamyl-phosphate reductase of Acidothermus cellulolyticus (strain ATCC 43068 / DSM 8971 / 11B).